A 100-amino-acid polypeptide reads, in one-letter code: Non-histone chromosomal protein HMG-14 (100 aa).

The tract at residues 1-100 is disordered; the sequence is MPKRKVSSAE…EAGEKEAKSD (100 aa). Ser-7 bears the ADP-ribosylserine mark. A Phosphoserine modification is found at Ser-8. N6-acetyllysine is present on Lys-14. Phosphoserine; by RPS6KA5 is present on Ser-21. ADP-ribosylserine; alternate is present on Ser-25. Residue Ser-25 is modified to Phosphoserine; alternate; by RPS6KA5. The residue at position 27 (Lys-27) is an N6-acetyllysine. Composition is skewed to basic and acidic residues over residues 30–50 and 69–85; these read AKVEAKPKKAAAKDKSSDKKV and ETKEDLPAENGETKTEE. Residue Thr-81 is modified to Phosphothreonine. Lys-82 carries the post-translational modification N6-acetyllysine. 3 positions are modified to phosphoserine: Ser-86, Ser-89, and Ser-99.

Interacts with transcriptional regulator SEHBP. Post-translationally, phosphorylation on Ser-21 and Ser-25 weakens binding to nucleosomes and increases the rate of H3 phosphorylation. Phosphorylation favors cytoplasmic localization.

It localises to the nucleus. The protein resides in the cytoplasm. Functionally, binds to the inner side of the nucleosomal DNA thus altering the interaction between the DNA and the histone octamer. May be involved in the process which maintains transcribable genes in a unique chromatin conformation. Inhibits the phosphorylation of nucleosomal histones H3 and H2A by RPS6KA5/MSK1 and RPS6KA3/RSK2. The sequence is that of Non-histone chromosomal protein HMG-14 (HMGN1) from Homo sapiens (Human).